The chain runs to 291 residues: NADH-cytochrome b5 reductase 2 (291 aa).

The chain crosses the membrane as a helical span at residues 7–23 (PIAATSVVAAAASSYYF). The 105-residue stretch at 41-145 (DQWVDLKLKS…KGPIIKYQWQ (105 aa)) folds into the FAD-binding FR-type domain. Residue 148 to 183 (LHKEITLIGAGTGITPLYQLISAINKNPEDKTKVNL) coordinates FAD.

This sequence belongs to the flavoprotein pyridine nucleotide cytochrome reductase family. Requires FAD as cofactor.

Its subcellular location is the mitochondrion outer membrane. The catalysed reaction is 2 Fe(III)-[cytochrome b5] + NADH = 2 Fe(II)-[cytochrome b5] + NAD(+) + H(+). May mediate the reduction of outer membrane cytochrome b5. The chain is NADH-cytochrome b5 reductase 2 (MCR1) from Yarrowia lipolytica (strain CLIB 122 / E 150) (Yeast).